Here is a 217-residue protein sequence, read N- to C-terminus: Octanoyltransferase (217 aa).

The region spanning 34–216 is the BPL/LPL catalytic domain; that stretch reads SETRDELWLL…AASRASRHDR (183 aa). Substrate contacts are provided by residues 73–80, 140–142, and 153–155; these read RGGQVTWH, ALG, and GLS. C171 serves as the catalytic Acyl-thioester intermediate.

It belongs to the LipB family.

It localises to the cytoplasm. The enzyme catalyses octanoyl-[ACP] + L-lysyl-[protein] = N(6)-octanoyl-L-lysyl-[protein] + holo-[ACP] + H(+). It participates in protein modification; protein lipoylation via endogenous pathway; protein N(6)-(lipoyl)lysine from octanoyl-[acyl-carrier-protein]: step 1/2. Functionally, catalyzes the transfer of endogenously produced octanoic acid from octanoyl-acyl-carrier-protein onto the lipoyl domains of lipoate-dependent enzymes. Lipoyl-ACP can also act as a substrate although octanoyl-ACP is likely to be the physiological substrate. The chain is Octanoyltransferase from Halorhodospira halophila (strain DSM 244 / SL1) (Ectothiorhodospira halophila (strain DSM 244 / SL1)).